We begin with the raw amino-acid sequence, 500 residues long: Cobyric acid synthase (500 aa).

The 194-residue stretch at 253–446 (KIGVAAIYFP…FHGFFDRPEV (194 aa)) folds into the GATase cobBQ-type domain. Cys334 acts as the Nucleophile in catalysis. His438 is a catalytic residue.

It belongs to the CobB/CobQ family. CobQ subfamily.

The protein operates within cofactor biosynthesis; adenosylcobalamin biosynthesis. Functionally, catalyzes amidations at positions B, D, E, and G on adenosylcobyrinic A,C-diamide. NH(2) groups are provided by glutamine, and one molecule of ATP is hydrogenolyzed for each amidation. The protein is Cobyric acid synthase of Chlorobaculum tepidum (strain ATCC 49652 / DSM 12025 / NBRC 103806 / TLS) (Chlorobium tepidum).